The following is a 146-amino-acid chain: Peptide methionine sulfoxide reductase MsrB (146 aa).

Residues 6 to 129 enclose the MsrB domain; sequence SAEAIAKLSA…NSASLRFVPK (124 aa). C118 functions as the Nucleophile in the catalytic mechanism.

This sequence belongs to the MsrB Met sulfoxide reductase family.

It carries out the reaction L-methionyl-[protein] + [thioredoxin]-disulfide + H2O = L-methionyl-(R)-S-oxide-[protein] + [thioredoxin]-dithiol. The sequence is that of Peptide methionine sulfoxide reductase MsrB from Brucella melitensis biotype 1 (strain ATCC 23456 / CCUG 17765 / NCTC 10094 / 16M).